Here is a 243-residue protein sequence, read N- to C-terminus: UPF0758 protein AM1_4368 (243 aa).

An MPN domain is found at 113 to 235 (VIDDPAVAAA…FTSLRQTTSL (123 aa)). His-184, His-186, and Asp-197 together coordinate Zn(2+). A JAMM motif motif is present at residues 184–197 (HNHPSGQTDPSPED).

Belongs to the UPF0758 family.

The sequence is that of UPF0758 protein AM1_4368 from Acaryochloris marina (strain MBIC 11017).